A 308-amino-acid chain; its full sequence is uncharacterized protein (308 aa).

Transmembrane regions (helical) follow at residues 6–26 (VVLIVLILVLVGYFSKIFGIL), 31–51 (AKILNNIVIYIAMPSTIFLTI), 63–83 (FLKLPVVIFLCCLFVGILAYL), 100–120 (ILVSMLGNTGFLGYPVALGMF), 128–148 (AIFCDLGGVFATMLLGTYVGI), 162–182 (MAKFPPLITGILSIILVFFGF), 195–215 (LNYLSSATVPLIMMSLGLSLS), 221–241 (FGVFWGIIASIFRFIVSPATA), 257–277 (VLLVESSMPSAMMTLVLGTLY), and 287–307 (SIFITTTFSLLVIALWGWILL).

It belongs to the auxin efflux carrier (TC 2.A.69) family.

The protein localises to the cell membrane. This is an uncharacterized protein from Methanocaldococcus jannaschii (strain ATCC 43067 / DSM 2661 / JAL-1 / JCM 10045 / NBRC 100440) (Methanococcus jannaschii).